Here is an 82-residue protein sequence, read N- to C-terminus: Penaeidin-3a (82 aa).

Positions 1–19 (MRLVVCLVFLASFALVCQG) are cleaved as a signal peptide. Gln-20 is modified (pyrrolidone carboxylic acid). 3 disulfide bridges follow: Cys-51/Cys-66, Cys-55/Cys-73, and Cys-67/Cys-74. Serine amide is present on Ser-81.

Post-translationally, the N-terminus forms pyrrolidone carboxylic acid. In terms of tissue distribution, higher expression in hemocytes and to a lesser extent in heart, testis, gills, intestine, lymphoid organ and hepatopancreas. Traces in eyes and subcuticular epithelium. Not present in the brain.

The protein resides in the cytoplasmic granule. In terms of biological role, antibacterial activity against M.luteus and E.coli bacteria. Antifungal activity against N.crassa and F.oxysporum. Presents chitin-binding activity. The sequence is that of Penaeidin-3a from Penaeus vannamei (Whiteleg shrimp).